The primary structure comprises 95 residues: Co-chaperonin GroES (95 aa).

Belongs to the GroES chaperonin family. In terms of assembly, heptamer of 7 subunits arranged in a ring. Interacts with the chaperonin GroEL.

It localises to the cytoplasm. Functionally, together with the chaperonin GroEL, plays an essential role in assisting protein folding. The GroEL-GroES system forms a nano-cage that allows encapsulation of the non-native substrate proteins and provides a physical environment optimized to promote and accelerate protein folding. GroES binds to the apical surface of the GroEL ring, thereby capping the opening of the GroEL channel. The sequence is that of Co-chaperonin GroES from Cereibacter sphaeroides (strain KD131 / KCTC 12085) (Rhodobacter sphaeroides).